Here is a 524-residue protein sequence, read N- to C-terminus: Translation initiation factor eIF2B subunit delta (524 aa).

The disordered stretch occupies residues 1–174; sequence MAAVAVAVRE…RQQVPTRKDY (174 aa). Alanine 2 carries the post-translational modification N-acetylalanine. Composition is skewed to basic and acidic residues over residues 8-20 and 31-40; these read VREE…KTEL and LTQEEKLQLR. Residue serine 12 is modified to Phosphoserine. Residues 41–51 show a composition bias toward basic residues; that stretch reads KEKKQQKKKRK. Threonine 86 bears the Phosphothreonine mark. 2 stretches are compositionally biased toward basic and acidic residues: residues 96–121 and 161–174; these read SKAE…RKGE and RKPD…RKDY. The may bind the chemical integrated stress response (ISR) inhibitor ISRIB stretch occupies residues 171 to 180; it reads RKDYGSKVSL.

It belongs to the eIF-2B alpha/beta/delta subunits family. In terms of assembly, component of the translation initiation factor 2B (eIF2B) complex which is a heterodecamer of two sets of five different subunits: alpha, beta, gamma, delta and epsilon. Subunits alpha, beta and delta comprise a regulatory subcomplex and subunits epsilon and gamma comprise a catalytic subcomplex. Within the complex, the hexameric regulatory complex resides at the center, with the two heterodimeric catalytic subcomplexes bound on opposite sides.

The protein localises to the cytoplasm. It localises to the cytosol. Activated by the chemical integrated stress response (ISR) inhibitor ISRIB which stimulates guanine nucleotide exchange factor activity for both phosphorylated and unphosphorylated eIF2. In terms of biological role, acts as a component of the translation initiation factor 2B (eIF2B) complex, which catalyzes the exchange of GDP for GTP on eukaryotic initiation factor 2 (eIF2) gamma subunit. Its guanine nucleotide exchange factor activity is repressed when bound to eIF2 complex phosphorylated on the alpha subunit, thereby limiting the amount of methionyl-initiator methionine tRNA available to the ribosome and consequently global translation is repressed. This is Translation initiation factor eIF2B subunit delta (Eif2b4) from Rattus norvegicus (Rat).